The following is an 82-amino-acid chain: Beta-defensin 113 (82 aa).

The first 16 residues, 1–16 (MKILCIFLTFFFTVSC), serve as a signal peptide directing secretion. 3 disulfides stabilise this stretch: C35-C61, C42-C56, and C46-C62.

The protein belongs to the beta-defensin family.

The protein localises to the secreted. In terms of biological role, has antibacterial activity. In Pan troglodytes (Chimpanzee), this protein is Beta-defensin 113 (DEFB113).